A 322-amino-acid polypeptide reads, in one-letter code: Methionyl-tRNA formyltransferase (322 aa).

112-115 (SLLP) is a binding site for (6S)-5,6,7,8-tetrahydrofolate.

This sequence belongs to the Fmt family.

It carries out the reaction L-methionyl-tRNA(fMet) + (6R)-10-formyltetrahydrofolate = N-formyl-L-methionyl-tRNA(fMet) + (6S)-5,6,7,8-tetrahydrofolate + H(+). In terms of biological role, attaches a formyl group to the free amino group of methionyl-tRNA(fMet). The formyl group appears to play a dual role in the initiator identity of N-formylmethionyl-tRNA by promoting its recognition by IF2 and preventing the misappropriation of this tRNA by the elongation apparatus. The polypeptide is Methionyl-tRNA formyltransferase (Synechococcus sp. (strain JA-2-3B'a(2-13)) (Cyanobacteria bacterium Yellowstone B-Prime)).